The primary structure comprises 453 residues: Phosphoglucosamine mutase (453 aa).

Residue S102 is the Phosphoserine intermediate of the active site. Mg(2+)-binding residues include S102, D243, D245, and D247. S102 bears the Phosphoserine mark.

Belongs to the phosphohexose mutase family. Mg(2+) serves as cofactor. Post-translationally, activated by phosphorylation.

The enzyme catalyses alpha-D-glucosamine 1-phosphate = D-glucosamine 6-phosphate. Functionally, catalyzes the conversion of glucosamine-6-phosphate to glucosamine-1-phosphate. In Bartonella tribocorum (strain CIP 105476 / IBS 506), this protein is Phosphoglucosamine mutase.